Here is a 149-residue protein sequence, read N- to C-terminus: Large ribosomal subunit protein eL19 (149 aa).

The tract at residues 67–90 (KRKLQKRKGRRRGHGSRKGAKGAR) is disordered.

The protein belongs to the eukaryotic ribosomal protein eL19 family. Part of the 50S ribosomal subunit.

Its function is as follows. Binds to the 23S rRNA. This Archaeoglobus fulgidus (strain ATCC 49558 / DSM 4304 / JCM 9628 / NBRC 100126 / VC-16) protein is Large ribosomal subunit protein eL19.